The chain runs to 400 residues: Tryptophan--tRNA ligase (400 aa).

Residues 12 to 20 (PTGALHLGH) carry the 'HIGH' region motif. The tract at residues 173–241 (REPGFEQKAL…RLFGYLEGAR (69 aa)) is insert. A 'KMSKS' region motif is present at residues 265-269 (KMSKS). Lys268 lines the ATP pocket. Positions 280-305 (KASVEKKVRTMPTDPARVRRTDPGDP) are disordered. Basic and acidic residues predominate over residues 295-304 (ARVRRTDPGD).

This sequence belongs to the class-I aminoacyl-tRNA synthetase family. In terms of assembly, homodimer.

The protein localises to the cytoplasm. The enzyme catalyses tRNA(Trp) + L-tryptophan + ATP = L-tryptophyl-tRNA(Trp) + AMP + diphosphate + H(+). The polypeptide is Tryptophan--tRNA ligase (trpS) (Ralstonia nicotianae (strain ATCC BAA-1114 / GMI1000) (Ralstonia solanacearum)).